Consider the following 675-residue polypeptide: Protein REPRESSOR OF VERNALIZATION 1 (675 aa).

Residues 1 to 143 (MGRRRRFTQQ…DPVKVTGKGK (143 aa)) form a disordered region. The segment covering 22–31 (AEPPKTAKPA) has biased composition (low complexity). The segment covering 48–70 (EEEDEDEEDELELEDEEDDEKDL) has biased composition (acidic residues). Residues 71–86 (EEMRRNEEEERREETR) show a composition bias toward basic and acidic residues. The short motif at 73 to 80 (MRRNEEEE) is the Nuclear localization signal element. Residues 87 to 96 (TRRRRGRKPK) show a composition bias toward basic residues. Acidic residues predominate over residues 113–127 (SDEEEEEEVREEDST). Residues 157-275 (NTFELEDPVL…TVAKKLWNLT (119 aa)) form the BAH domain. 3 disordered regions span residues 300–349 (ELPD…KPET), 493–512 (GLTP…LQMT), and 587–675 (LASP…ADHE). Composition is skewed to basic and acidic residues over residues 333 to 346 (VSRD…HFVK), 499 to 512 (KTSE…LQMT), and 613 to 627 (KLEK…KPEE). The region spanning 372-518 (YRDKWLDKLL…LQMTDARCER (147 aa)) is the TFIIS central domain.

As to expression, expressed constitutively.

The protein localises to the nucleus. Component of a grass-specific mechanism of vernalization, a process by which prolonged cold exposure provides competence to flower in daylengths longer than 12 hours. Negative regulator of flowering required for vernalization establishment by repressing VRN1 before vernalization and in the fall season. The polypeptide is Protein REPRESSOR OF VERNALIZATION 1 (Brachypodium distachyon (Purple false brome)).